The chain runs to 210 residues: HTH-type transcriptional repressor FabR (210 aa).

The HTH tetR-type domain occupies 10-70 (KTRRSLVEAA…TMVDESGLML (61 aa)). Residues 33 to 52 (SLREVAREAGIAPTSFYRHF) constitute a DNA-binding region (H-T-H motif).

As to quaternary structure, homodimer.

The protein resides in the cytoplasm. Represses the transcription of fabB, involved in unsaturated fatty acid (UFA) biosynthesis. By controlling UFA production, FabR directly influences the physical properties of the membrane bilayer. The polypeptide is HTH-type transcriptional repressor FabR (Citrobacter koseri (strain ATCC BAA-895 / CDC 4225-83 / SGSC4696)).